The primary structure comprises 796 residues: uncharacterized protein (796 aa).

It localises to the mitochondrion. This is an uncharacterized protein from Dictyostelium discoideum (Social amoeba).